Consider the following 953-residue polypeptide: Isoleucine--tRNA ligase (953 aa).

Positions 57-67 match the 'HIGH' region motif; sequence PYANGDIHIGH. An L-isoleucyl-5'-AMP-binding site is contributed by glutamate 582. The 'KMSKS' region motif lies at 623 to 627; sequence KMSKS. An ATP-binding site is contributed by lysine 626. Cysteine 916, cysteine 919, cysteine 936, and cysteine 939 together coordinate Zn(2+).

The protein belongs to the class-I aminoacyl-tRNA synthetase family. IleS type 1 subfamily. In terms of assembly, monomer. It depends on Zn(2+) as a cofactor.

It localises to the cytoplasm. The catalysed reaction is tRNA(Ile) + L-isoleucine + ATP = L-isoleucyl-tRNA(Ile) + AMP + diphosphate. Catalyzes the attachment of isoleucine to tRNA(Ile). As IleRS can inadvertently accommodate and process structurally similar amino acids such as valine, to avoid such errors it has two additional distinct tRNA(Ile)-dependent editing activities. One activity is designated as 'pretransfer' editing and involves the hydrolysis of activated Val-AMP. The other activity is designated 'posttransfer' editing and involves deacylation of mischarged Val-tRNA(Ile). This Bordetella parapertussis (strain 12822 / ATCC BAA-587 / NCTC 13253) protein is Isoleucine--tRNA ligase.